The chain runs to 79 residues: Transcriptional regulator SplA (79 aa).

Its function is as follows. Regulator of the spore photoproduct lyase operon (splAB). The polypeptide is Transcriptional regulator SplA (splA) (Bacillus subtilis (strain 168)).